A 651-amino-acid polypeptide reads, in one-letter code: Carboxypeptidase S1 homolog A (651 aa).

A signal peptide spans 1–19; it reads MHLATGLAVALPFIGAASA. A disulfide bridge connects residues Cys50 and Cys121. 6 N-linked (GlcNAc...) asparagine glycosylation sites follow: Asn77, Asn125, Asn128, Asn161, Asn184, and Asn202. Ser238 is an active-site residue. Asn260, Asn299, Asn308, Asn347, and Asn410 each carry an N-linked (GlcNAc...) asparagine glycan. Intrachain disulfides connect Cys325–Cys361 and Cys332–Cys354. The active site involves Asp458. Cys461 is a substrate binding site. Asn474 and Asn504 each carry an N-linked (GlcNAc...) asparagine glycan. Residue His515 is part of the active site. Glu516 contributes to the substrate binding site. The segment at 604–630 is disordered; sequence KSPAGKKQGPPPTSTSPPSPTSSSEGS. The span at 612 to 623 shows a compositional bias: pro residues; it reads GPPPTSTSPPSP. A lipid anchor (GPI-anchor amidated serine) is attached at Ser625. The propeptide at 626–651 is removed in mature form; that stretch reads SSEGSVKEFSVSVLGVSVLAAITFFL.

It belongs to the peptidase S10 family.

It localises to the cell membrane. The enzyme catalyses Preferential release of a C-terminal arginine or lysine residue.. Extracellular serine carboxypeptidase that contributes to pathogenicity. The sequence is that of Carboxypeptidase S1 homolog A (SCPA) from Arthroderma otae (strain ATCC MYA-4605 / CBS 113480) (Microsporum canis).